The chain runs to 267 residues: 2-keto-3-deoxy-L-rhamnonate aldolase (267 aa).

His49 acts as the Proton acceptor in catalysis. A substrate-binding site is contributed by Gln151. Residue Glu153 participates in Mg(2+) binding. Residues Ala178 and Asp179 each contribute to the substrate site. Residue Asp179 coordinates Mg(2+).

Belongs to the HpcH/HpaI aldolase family. KDR aldolase subfamily. As to quaternary structure, homohexamer. Mg(2+) serves as cofactor.

It carries out the reaction 2-dehydro-3-deoxy-L-rhamnonate = (S)-lactaldehyde + pyruvate. In terms of biological role, catalyzes the reversible retro-aldol cleavage of 2-keto-3-deoxy-L-rhamnonate (KDR) to pyruvate and lactaldehyde. The polypeptide is 2-keto-3-deoxy-L-rhamnonate aldolase (Salmonella enteritidis PT4 (strain P125109)).